An 86-amino-acid chain; its full sequence is Latartoxin-1b (86 aa).

A signal peptide spans 1 to 19; sequence MKILVLAVVCTVLLQVALS. Positions 20-26 are cleaved as a propeptide — removed in mature form; it reads ADSEEVR. The Processing quadruplet motif signature appears at 23–26; that stretch reads EEVR. Intrachain disulfides connect Cys28–Cys43, Cys35–Cys48, Cys42–Cys65, and Cys50–Cys63.

The protein belongs to the neurotoxin 19 (CSTX) family. Contains 4 disulfide bonds. Post-translationally, cleavage of the propeptide depends on the processing quadruplet motif (XXXR, with at least one of X being E). As to expression, expressed by the venom gland.

It localises to the secreted. Insect toxin. In Lachesana tarabaevi (Spider), this protein is Latartoxin-1b.